The sequence spans 333 residues: Homeobox protein Nkx-3.2 (333 aa).

Disordered regions lie at residues 74-121 (PART…RARV) and 137-212 (DLEE…SRAA). Residues 137-148 (DLEEEAPVRSDS) show a composition bias toward basic and acidic residues. A compositionally biased stretch (gly residues) spans 179–191 (GAAGSGASGGQAG). The segment at residues 206-265 (KKRSRAAFSHAQVFELERRFNHQRYLSGPERADLAASLKLTETQVKIWFQNRRYKTKRRQ) is a DNA-binding region (homeobox).

It belongs to the NK-3 homeobox family. Expressed widely in mesoderm at the gastroduodenal junction (at protein level). Expressed in visceral mesoderm and embryonic skeleton. Expression is restricted to immature proliferative chondrocytes during endochondral ossification.

Its subcellular location is the nucleus. Functionally, transcriptional repressor that acts as a negative regulator of chondrocyte maturation. PLays a role in distal stomach development; required for proper antral-pyloric morphogenesis and development of antral-type epithelium. In concert with GSC, defines the structural components of the middle ear; required for tympanic ring and gonium development and in the regulation of the width of the malleus. This is Homeobox protein Nkx-3.2 (Nkx3-2) from Mus musculus (Mouse).